Reading from the N-terminus, the 184-residue chain is ATP-dependent protease subunit HslV (184 aa).

Threonine 12 is a catalytic residue. Na(+) is bound by residues glycine 167, cysteine 170, and threonine 173.

Belongs to the peptidase T1B family. HslV subfamily. In terms of assembly, a double ring-shaped homohexamer of HslV is capped on each side by a ring-shaped HslU homohexamer. The assembly of the HslU/HslV complex is dependent on binding of ATP.

The protein resides in the cytoplasm. The enzyme catalyses ATP-dependent cleavage of peptide bonds with broad specificity.. Allosterically activated by HslU binding. Functionally, protease subunit of a proteasome-like degradation complex believed to be a general protein degrading machinery. The protein is ATP-dependent protease subunit HslV of Wolbachia sp. subsp. Drosophila simulans (strain wRi).